Reading from the N-terminus, the 294-residue chain is MTASAKRLLLVHAHPDDETITTGGTIARYASEGADVTVLTCTLGEEGEVIGDAWAGLVAAEADQLGGYRIAELSAALSALGSAAPRFLAGAGRYRDSGMIGTPSAANPRAFVNARLDEAVSAVVAVIREIRPHVVITYDPNGGYGHPDHIQAHAITTAAVEAAATAAYPEAGEPWSTPKFYWTVTERSGLERGIAAISEFPENWRLPEPGELPSVEDSDVTTAIDVRGVINAKARALSAHATQVTVAPSGAEFALSNNVVQPILTVEHFVLAAGTLGPVGEDGRERDLFGGLHS.

Histidine 14, aspartate 17, and histidine 149 together coordinate Zn(2+).

Belongs to the MshB deacetylase family. Requires Zn(2+) as cofactor.

The catalysed reaction is 1D-myo-inositol 2-acetamido-2-deoxy-alpha-D-glucopyranoside + H2O = 1D-myo-inositol 2-amino-2-deoxy-alpha-D-glucopyranoside + acetate. Functionally, catalyzes the deacetylation of 1D-myo-inositol 2-acetamido-2-deoxy-alpha-D-glucopyranoside (GlcNAc-Ins) in the mycothiol biosynthesis pathway. The sequence is that of 1D-myo-inositol 2-acetamido-2-deoxy-alpha-D-glucopyranoside deacetylase from Rhodococcus erythropolis (strain PR4 / NBRC 100887).